The primary structure comprises 149 residues: Angiogenin (149 aa).

Residues 1–24 (MVMGLGPLVLIFVLGLGVTPPTLA) form the signal peptide. Glutamine 25 carries the post-translational modification Pyrrolidone carboxylic acid. The active-site Proton acceptor is the histidine 37. Residue arginine 45 coordinates tRNA. 3 cysteine pairs are disulfide-bonded: cysteine 50/cysteine 105, cysteine 63/cysteine 116, and cysteine 81/cysteine 131. Residues 55-59 (KRRDL) carry the Nucleolar localization signal motif. TRNA is bound by residues cysteine 105 and isoleucine 127. Catalysis depends on histidine 138, which acts as the Proton donor.

It belongs to the pancreatic ribonuclease family. As to quaternary structure, homodimer. Interacts with RNH1; inhibiting ANG ribonuclease activity. Interacts with PCNA.

It is found in the secreted. The protein resides in the nucleus. The protein localises to the nucleolus. It localises to the cytoplasm. Its subcellular location is the stress granule. Its activity is regulated as follows. Has weak tRNA ribonuclease activity by itself due to partial autoinhibition by its C-terminus, which folds into a short alpha-helix that partially occludes the substrate-binding site. In absence of stress, the ribonuclease activity is inhibited by RNH1 in the cytoplasm. In response to stress, dissociates from RNH1 in the cytoplasm and associates with cytoplasmic ribosomes with vacant A-sites: ribosomes directly activate the tRNA ribonuclease activity of ANG by refolding the C-terminal alpha-helix. In response to stress, the angiogenic activity of ANG is inhibited by RNH1 in the nucleus. Its function is as follows. Secreted ribonuclease that can either promote or restrict cell proliferation of target cells, depending on the context. Endocytosed in target cells via its receptor PLXNB2 and translocates to the cytoplasm or nucleus. Under stress conditions, localizes to the cytoplasm and promotes the assembly of stress granules (SGs): specifically cleaves a subset of tRNAs within anticodon loops to produce tRNA-derived stress-induced fragments (tiRNAs), resulting in translation repression and inhibition of cell proliferation. tiRNas also prevent formation of apoptosome, thereby promoting cell survival. Preferentially cleaves RNAs between a pyrimidine and an adenosine residue, suggesting that it cleaves the anticodon loop of tRNA(Ala) (32-UUAGCAU-38) after positions 33 and 36. Cleaves a subset of tRNAs, including tRNA(Ala), tRNA(Glu), tRNA(Gly), tRNA(Lys), tRNA(Val), tRNA(His), tRNA(Asp) and tRNA(Sec). Under growth conditions and in differentiated cells, translocates to the nucleus and stimulates ribosomal RNA (rRNA) transcription, including that containing the initiation site sequences of 45S rRNA, thereby promoting cell growth and proliferation. Angiogenin induces vascularization of normal and malignant tissues via its ability to promote rRNA transcription. Involved in hematopoietic stem and progenitor cell (HSPC) growth and survival by promoting rRNA transcription in growth conditions and inhibiting translation in response to stress, respectively. Mediates the crosstalk between myeloid and intestinal epithelial cells to protect the intestinal epithelial barrier integrity: secreted by myeloid cells and promotes intestinal epithelial cells proliferation and survival. Also mediates osteoclast-endothelial cell crosstalk in growing bone: produced by osteoclasts and protects the neighboring vascular cells against senescence by promoting rRNA transcription. This is Angiogenin (ANG) from Oryctolagus cuniculus (Rabbit).